The following is a 369-amino-acid chain: Type 2 DNA topoisomerase 6 subunit A (369 aa).

The Topo IIA-type catalytic domain maps to 10–146; the sequence is KPREIAKQKI…LGFIPEEDGS (137 aa). Catalysis depends on Tyr103, which acts as the O-(5'-phospho-DNA)-tyrosine intermediate. Residues Glu197 and Asp249 each coordinate Mg(2+).

The protein belongs to the TOP6A family. As to quaternary structure, homodimer. Heterotetramer of two Top6A and two Top6B chains. It depends on Mg(2+) as a cofactor.

The enzyme catalyses ATP-dependent breakage, passage and rejoining of double-stranded DNA.. Functionally, relaxes both positive and negative superturns and exhibits a strong decatenase activity. The protein is Type 2 DNA topoisomerase 6 subunit A of Methanocaldococcus jannaschii (strain ATCC 43067 / DSM 2661 / JAL-1 / JCM 10045 / NBRC 100440) (Methanococcus jannaschii).